We begin with the raw amino-acid sequence, 236 residues long: Small ribosomal subunit protein uS3 (236 aa).

The 69-residue stretch at 39–107 (IREFLTEELK…DTSLNIVEVR (69 aa)) folds into the KH type-2 domain. A disordered region spans residues 214–236 (ASERRAVEGDNQGSSSNRRRENA).

This sequence belongs to the universal ribosomal protein uS3 family. Part of the 30S ribosomal subunit. Forms a tight complex with proteins S10 and S14.

Its function is as follows. Binds the lower part of the 30S subunit head. Binds mRNA in the 70S ribosome, positioning it for translation. This chain is Small ribosomal subunit protein uS3, found in Brucella canis (strain ATCC 23365 / NCTC 10854 / RM-666).